Here is a 230-residue protein sequence, read N- to C-terminus: Large ribosomal subunit protein uL1 (230 aa).

The protein belongs to the universal ribosomal protein uL1 family. Part of the 50S ribosomal subunit.

Its function is as follows. Binds directly to 23S rRNA. The L1 stalk is quite mobile in the ribosome, and is involved in E site tRNA release. Functionally, protein L1 is also a translational repressor protein, it controls the translation of the L11 operon by binding to its mRNA. The polypeptide is Large ribosomal subunit protein uL1 (Leptospira borgpetersenii serovar Hardjo-bovis (strain JB197)).